Here is a 180-residue protein sequence, read N- to C-terminus: UPF0743 protein C215.06c (180 aa).

C2HC LYAR-type zinc fingers lie at residues 1–26 and 27–51; these read MVSF…SRCH and GAYF…TSCM. The Zn(2+) site is built by C6, C9, H21, C25, C32, C35, H47, and C50. The segment at 61 to 125 is disordered; the sequence is LYRPTKKELK…KETVSSPAEQ (65 aa). Residues 77–95 show a composition bias toward polar residues; that stretch reads NAVNSKELSPNTDNQNTPA. At S85 the chain carries Phosphoserine. Basic and acidic residues predominate over residues 100-111; that stretch reads HSLDENEKDKEN.

This sequence belongs to the UPF0743 family.

The protein localises to the nucleus. This Schizosaccharomyces pombe (strain 972 / ATCC 24843) (Fission yeast) protein is UPF0743 protein C215.06c.